Here is a 358-residue protein sequence, read N- to C-terminus: Uroporphyrinogen decarboxylase (358 aa).

Residues 29-33 (RQAGR), Phe48, Asp79, Tyr155, Ser210, and His330 contribute to the substrate site.

Belongs to the uroporphyrinogen decarboxylase family. Homodimer.

It localises to the cytoplasm. It carries out the reaction uroporphyrinogen III + 4 H(+) = coproporphyrinogen III + 4 CO2. It functions in the pathway porphyrin-containing compound metabolism; protoporphyrin-IX biosynthesis; coproporphyrinogen-III from 5-aminolevulinate: step 4/4. In terms of biological role, catalyzes the decarboxylation of four acetate groups of uroporphyrinogen-III to yield coproporphyrinogen-III. In Bordetella bronchiseptica (strain ATCC BAA-588 / NCTC 13252 / RB50) (Alcaligenes bronchisepticus), this protein is Uroporphyrinogen decarboxylase.